Reading from the N-terminus, the 102-residue chain is Large ribosomal subunit protein bL21 (102 aa).

The protein belongs to the bacterial ribosomal protein bL21 family. As to quaternary structure, part of the 50S ribosomal subunit. Contacts protein L20.

In terms of biological role, this protein binds to 23S rRNA in the presence of protein L20. This is Large ribosomal subunit protein bL21 from Trichlorobacter lovleyi (strain ATCC BAA-1151 / DSM 17278 / SZ) (Geobacter lovleyi).